A 365-amino-acid polypeptide reads, in one-letter code: S-adenosylmethionine:tRNA ribosyltransferase-isomerase (365 aa).

This sequence belongs to the QueA family. As to quaternary structure, monomer.

It is found in the cytoplasm. It catalyses the reaction 7-aminomethyl-7-carbaguanosine(34) in tRNA + S-adenosyl-L-methionine = epoxyqueuosine(34) in tRNA + adenine + L-methionine + 2 H(+). It functions in the pathway tRNA modification; tRNA-queuosine biosynthesis. Functionally, transfers and isomerizes the ribose moiety from AdoMet to the 7-aminomethyl group of 7-deazaguanine (preQ1-tRNA) to give epoxyqueuosine (oQ-tRNA). The protein is S-adenosylmethionine:tRNA ribosyltransferase-isomerase of Rickettsia peacockii (strain Rustic).